Here is a 224-residue protein sequence, read N- to C-terminus: UPF0758 protein VV1_0825 (224 aa).

The tract at residues methionine 1 to glycine 20 is disordered. Positions alanine 102 to isoleucine 224 constitute an MPN domain. 3 residues coordinate Zn(2+): histidine 173, histidine 175, and aspartate 186. Residues histidine 173–aspartate 186 carry the JAMM motif motif.

The protein belongs to the UPF0758 family.

This Vibrio vulnificus (strain CMCP6) protein is UPF0758 protein VV1_0825.